Here is a 390-residue protein sequence, read N- to C-terminus: 5-hydroxytryptamine receptor 1B (390 aa).

Residues 1 to 46 (MEEPGAQCAPPXPAGSETWVPQANLSSAPSQNCSAKDYIYQDSIAL) are Extracellular-facing. N-linked (GlcNAc...) asparagine glycosylation is found at Asn24 and Asn32. The helical transmembrane segment at 47–72 (PWKVLLVMLLALITLATTLSNAFVIA) threads the bilayer. Topologically, residues 73-86 (TVYRTRKLHTPANY) are cytoplasmic. Residues 87 to 111 (LIASLAVTDLLVSILVMPISTMYTV) traverse the membrane as a helical segment. The Extracellular segment spans residues 112–119 (TGRWTLGQ). A helical membrane pass occupies residues 120-145 (VVCDFWLSSDITCCTASILHLCVIAL). Cys122 and Cys199 form a disulfide bridge. Positions 129 and 134 each coordinate ergotamine. A DRY motif; important for ligand-induced conformation changes and signaling motif is present at residues 146-148 (DRY). Topologically, residues 146-165 (DRYWAITDAVEYSAKRTPKR) are cytoplasmic. The chain crosses the membrane as a helical span at residues 166-184 (AAVMIALVWVFSISISLPP). The Extracellular portion of the chain corresponds to 185–205 (FFWRQAKAEEEVSECVVNTDH). Val201 is a binding site for ergotamine. A helical membrane pass occupies residues 206-229 (ILYTVYSTVGAFYFPTLLLIALYG). Residues 230 to 315 (RIYVEARSRI…AARERKATKT (86 aa)) are Cytoplasmic-facing. The span at 259 to 272 (DSPGSTSSVTSINS) shows a compositional bias: polar residues. The segment at 259–281 (DSPGSTSSVTSINSRVPDVPSES) is disordered. Residues 316–337 (LGIILGAFIVCWLPFFIISLVM) form a helical membrane-spanning segment. Residues 338 to 347 (PICKDACWFH) lie on the Extracellular side of the membrane. Residues 348–370 (LAIFDFFTWLGYLNSLINPIIYT) traverse the membrane as a helical segment. The NPxxY motif; important for ligand-induced conformation changes and signaling signature appears at 365 to 369 (NPIIY). At 371-390 (MSNEDFKQAFHKLIRFKCTS) the chain is on the cytoplasmic side. The S-palmitoyl cysteine moiety is linked to residue Cys388.

This sequence belongs to the G-protein coupled receptor 1 family. As to quaternary structure, homodimer. Heterodimer with HTR1D. Post-translationally, phosphorylated. Desensitization of the receptor may be mediated by its phosphorylation. Palmitoylated.

Its subcellular location is the cell membrane. In terms of biological role, G-protein coupled receptor for 5-hydroxytryptamine (serotonin). Also functions as a receptor for ergot alkaloid derivatives, various anxiolytic and antidepressant drugs and other psychoactive substances, such as lysergic acid diethylamide (LSD). Ligand binding causes a conformation change that triggers signaling via guanine nucleotide-binding proteins (G proteins) and modulates the activity of downstream effectors, such as adenylate cyclase. HTR1B is coupled to G(i)/G(o) G alpha proteins and mediates inhibitory neurotransmission by inhibiting adenylate cyclase activity. Arrestin family members inhibit signaling via G proteins and mediate activation of alternative signaling pathways. Regulates the release of 5-hydroxytryptamine, dopamine and acetylcholine in the brain, and thereby affects neural activity, nociceptive processing, pain perception, mood and behavior. Besides, plays a role in vasoconstriction of cerebral arteries. This chain is 5-hydroxytryptamine receptor 1B (HTR1B), found in Gorilla gorilla gorilla (Western lowland gorilla).